A 383-amino-acid polypeptide reads, in one-letter code: Succinate--CoA ligase [ADP-forming] subunit beta (383 aa).

Residues 9–241 enclose the ATP-grasp domain; that stretch reads KEVLHKFNVS…YDEEVKEEIE (233 aa). ATP contacts are provided by residues lysine 46, 53 to 55, glutamate 99, serine 102, and glutamate 107; that span reads GRG. Residues asparagine 196 and aspartate 210 each coordinate Mg(2+). Substrate is bound by residues asparagine 261 and 318–320; that span reads GIM.

It belongs to the succinate/malate CoA ligase beta subunit family. Heterotetramer of two alpha and two beta subunits. Mg(2+) serves as cofactor.

It carries out the reaction succinate + ATP + CoA = succinyl-CoA + ADP + phosphate. The enzyme catalyses GTP + succinate + CoA = succinyl-CoA + GDP + phosphate. It participates in carbohydrate metabolism; tricarboxylic acid cycle; succinate from succinyl-CoA (ligase route): step 1/1. Its function is as follows. Succinyl-CoA synthetase functions in the citric acid cycle (TCA), coupling the hydrolysis of succinyl-CoA to the synthesis of either ATP or GTP and thus represents the only step of substrate-level phosphorylation in the TCA. The beta subunit provides nucleotide specificity of the enzyme and binds the substrate succinate, while the binding sites for coenzyme A and phosphate are found in the alpha subunit. In Wolbachia sp. subsp. Drosophila simulans (strain wRi), this protein is Succinate--CoA ligase [ADP-forming] subunit beta.